Here is a 198-residue protein sequence, read N- to C-terminus: Recombination protein RecR (198 aa).

The C4-type zinc-finger motif lies at 57–72; that stretch reads CSVCHNITDTDPCRIC. The region spanning 80–175 is the Toprim domain; sequence SVICVVQDAK…KVTRIAHGLP (96 aa).

This sequence belongs to the RecR family.

May play a role in DNA repair. It seems to be involved in an RecBC-independent recombinational process of DNA repair. It may act with RecF and RecO. This is Recombination protein RecR from Halalkalibacterium halodurans (strain ATCC BAA-125 / DSM 18197 / FERM 7344 / JCM 9153 / C-125) (Bacillus halodurans).